A 152-amino-acid polypeptide reads, in one-letter code: Endoribonuclease YbeY (152 aa).

Zn(2+) contacts are provided by histidine 113, histidine 117, and histidine 123.

This sequence belongs to the endoribonuclease YbeY family. The cofactor is Zn(2+).

The protein localises to the cytoplasm. Single strand-specific metallo-endoribonuclease involved in late-stage 70S ribosome quality control and in maturation of the 3' terminus of the 16S rRNA. This Acidovorax sp. (strain JS42) protein is Endoribonuclease YbeY.